The following is a 142-amino-acid chain: Hemoglobin subunit alpha (142 aa).

The 141-residue stretch at 2-142 (VLSSQNKKAI…VAYELSSCYR (141 aa)) folds into the Globin domain. His60 contributes to the O2 binding site. Position 89 (His89) interacts with heme b.

Belongs to the globin family. In terms of assembly, heterotetramer of two alpha chains and two beta chains. Red blood cells.

Its function is as follows. Involved in oxygen transport from gills to the various peripheral tissues. In Hemitrygon akajei (Red stingray), this protein is Hemoglobin subunit alpha (hba).